We begin with the raw amino-acid sequence, 158 residues long: NADPH-dependent 7-cyano-7-deazaguanine reductase (158 aa).

C56 functions as the Thioimide intermediate in the catalytic mechanism. D63 (proton donor) is an active-site residue. Residues 78 to 80 (VES) and 97 to 98 (HE) each bind substrate.

It belongs to the GTP cyclohydrolase I family. QueF type 1 subfamily.

It localises to the cytoplasm. The enzyme catalyses 7-aminomethyl-7-carbaguanine + 2 NADP(+) = 7-cyano-7-deazaguanine + 2 NADPH + 3 H(+). It functions in the pathway tRNA modification; tRNA-queuosine biosynthesis. Its function is as follows. Catalyzes the NADPH-dependent reduction of 7-cyano-7-deazaguanine (preQ0) to 7-aminomethyl-7-deazaguanine (preQ1). In Rhodopseudomonas palustris (strain HaA2), this protein is NADPH-dependent 7-cyano-7-deazaguanine reductase.